The following is a 551-amino-acid chain: MAAKEVKFGEAARAKMLNGVNILANAVKVTLGPKGRNVVLDKSWGAPRMTKDGVSVAKEIELEDKFENMGAQMVREVSSKTADVAGDGTTTATVLAQAIIREGMKAVAAGMNPMDLKRGIDLAVEAVVVGLKGISREVANSQEIAQVGAISANSDKVVGDMIAEAMDKVGKEGVITVEEAKGLETTLDVVEGMQFDRGYLSPYFVTNADKMLVQMENPLILLVEKKISNLQQILQILEGAVQSSRPLMIIAEDVEGEALATLVVNKLRGGLKVCAVKAPGFGDRRKAMMEDIATLTGGVLVSEDVGVKLENVTMDMLGMAKSIVVTKEDTTIIDGAGDHEAIKARVNQIRAQIEETSSDYDREKLQERLAKLAGGVAVIKVGGATEVEVKERKDRVDDALHATRAAVEEGIVPGGGVALLRAREASLTNLQGANHDQQVGINIVTRALEEPLRIIASNAGAEGSVVVNRVVETKETNFGFNAATGVYEDLVASGVIDPAKVVRHALQAAASVAGLMITTEAMVAELPKDEPAMPGGDMGGMGGMGGMGGMM.

Residues 30-33 (TLGP), Lys-51, 87-91 (DGTTT), Gly-415, 481-483 (NAA), and Asp-497 contribute to the ATP site.

Belongs to the chaperonin (HSP60) family. In terms of assembly, forms a cylinder of 14 subunits composed of two heptameric rings stacked back-to-back. Interacts with the co-chaperonin GroES.

It localises to the cytoplasm. It carries out the reaction ATP + H2O + a folded polypeptide = ADP + phosphate + an unfolded polypeptide.. In terms of biological role, together with its co-chaperonin GroES, plays an essential role in assisting protein folding. The GroEL-GroES system forms a nano-cage that allows encapsulation of the non-native substrate proteins and provides a physical environment optimized to promote and accelerate protein folding. This chain is Chaperonin GroEL, found in Magnetococcus marinus (strain ATCC BAA-1437 / JCM 17883 / MC-1).